The primary structure comprises 407 residues: 12S rRNA N(4)-cytidine methyltransferase METTL15 (407 aa).

The tract at residues 44 to 63 (EAQEETDQTGIQELHRSQDR) is disordered. Residues 100 to 102 (GGH), D119, F146, D169, and Q176 each bind S-adenosyl-L-methionine. S358 is subject to Phosphoserine. Positions 386-407 (EDEDVQDNPRGRSAKLRAAIKL) are disordered. The segment covering 397–407 (RSAKLRAAIKL) has biased composition (basic residues).

The protein belongs to the methyltransferase superfamily. RsmH family.

Its subcellular location is the mitochondrion matrix. It carries out the reaction cytidine(839) in 12S rRNA + S-adenosyl-L-methionine = N(4)-methylcytidine(839) in 12S rRNA + S-adenosyl-L-homocysteine + H(+). Its function is as follows. N4-methylcytidine (m4C) methyltransferase responsible for the methylation of position C839 in mitochondrial 12S rRNA. Involved in the stabilization of 12S rRNA folding, therefore facilitating the assembly of the mitochondrial small ribosomal subunits. The protein is 12S rRNA N(4)-cytidine methyltransferase METTL15 (METTL15) of Bos taurus (Bovine).